A 483-amino-acid chain; its full sequence is 6-phosphogluconate dehydrogenase, decarboxylating 1 (483 aa).

NADP(+)-binding positions include 11–16 (GLAVMG), 34–36 (NRT), 78–80 (VKA), and Asn106. Residues Asn106 and 132 to 134 (SGG) each bind substrate. The active-site Proton acceptor is Lys186. 189-190 (HN) contributes to the substrate binding site. Glu193 acts as the Proton donor in catalysis. Residues Tyr194, Lys264, Arg291, Arg454, and His460 each coordinate substrate.

Belongs to the 6-phosphogluconate dehydrogenase family. Homodimer.

Its subcellular location is the cytoplasm. It catalyses the reaction 6-phospho-D-gluconate + NADP(+) = D-ribulose 5-phosphate + CO2 + NADPH. It functions in the pathway carbohydrate degradation; pentose phosphate pathway; D-ribulose 5-phosphate from D-glucose 6-phosphate (oxidative stage): step 3/3. Catalyzes the oxidative decarboxylation of 6-phosphogluconate to ribulose 5-phosphate and CO(2), with concomitant reduction of NADP to NADPH. This is 6-phosphogluconate dehydrogenase, decarboxylating 1 (pgdC) from Spinacia oleracea (Spinach).